A 150-amino-acid polypeptide reads, in one-letter code: Keratin-associated protein 15-1 (150 aa).

The protein belongs to the PMG family. In terms of assembly, interacts with hair keratins. As to expression, expressed at high levels in skin and at lower levels in the developing mammary gland.

Its function is as follows. In the hair cortex, hair keratin intermediate filaments are embedded in an interfilamentous matrix, consisting of hair keratin-associated proteins (KRTAP), which are essential for the formation of a rigid and resistant hair shaft through their extensive disulfide bond cross-linking with abundant cysteine residues of hair keratins. The matrix proteins include the high-sulfur and high-glycine-tyrosine keratins. The chain is Keratin-associated protein 15-1 from Mus musculus (Mouse).